The following is a 63-amino-acid chain: Hyphancin-3E (63 aa).

Residues 1–22 (MNFSRILFFVFTCFVALASVSG) form the signal peptide. Residues 23 to 26 (APEP) constitute a propeptide, removed by a dipeptidylpeptidase. Leu-61 is subject to Leucine amide.

It belongs to the cecropin family.

The protein resides in the secreted. In terms of biological role, has antibacterial activity. In Hyphantria cunea (Fall webworm moth), this protein is Hyphancin-3E.